The chain runs to 237 residues: Cytochrome c oxidase subunit 2 (237 aa).

Topologically, residues 1 to 30 are mitochondrial intermembrane; sequence MNLVAPTPWGLFFQDSATPQMEGIEELHNN. A helical transmembrane segment spans residues 31 to 51; sequence IMFYLTIILFSVTWMMITIIK. Topologically, residues 52-67 are mitochondrial matrix; sequence SFVNTKSPISHKYMNH. A helical transmembrane segment spans residues 68–94; it reads GTLIELIWTITPAVILILIAFPSFKLL. Topologically, residues 95–237 are mitochondrial intermembrane; the sequence is YLMDEVMDPS…SVSLKNFYYD (143 aa). 6 residues coordinate Cu cation: His176, Cys211, Glu213, Cys215, His219, and Met222. Glu213 contacts Mg(2+).

It belongs to the cytochrome c oxidase subunit 2 family. In terms of assembly, component of the cytochrome c oxidase (complex IV, CIV), a multisubunit enzyme composed of a catalytic core of 3 subunits and several supernumerary subunits. The complex exists as a monomer or a dimer and forms supercomplexes (SCs) in the inner mitochondrial membrane with ubiquinol-cytochrome c oxidoreductase (cytochrome b-c1 complex, complex III, CIII). Requires Cu cation as cofactor.

The protein localises to the mitochondrion inner membrane. The catalysed reaction is 4 Fe(II)-[cytochrome c] + O2 + 8 H(+)(in) = 4 Fe(III)-[cytochrome c] + 2 H2O + 4 H(+)(out). Component of the cytochrome c oxidase, the last enzyme in the mitochondrial electron transport chain which drives oxidative phosphorylation. The respiratory chain contains 3 multisubunit complexes succinate dehydrogenase (complex II, CII), ubiquinol-cytochrome c oxidoreductase (cytochrome b-c1 complex, complex III, CIII) and cytochrome c oxidase (complex IV, CIV), that cooperate to transfer electrons derived from NADH and succinate to molecular oxygen, creating an electrochemical gradient over the inner membrane that drives transmembrane transport and the ATP synthase. Cytochrome c oxidase is the component of the respiratory chain that catalyzes the reduction of oxygen to water. Electrons originating from reduced cytochrome c in the intermembrane space (IMS) are transferred via the dinuclear copper A center (CU(A)) of subunit 2 and heme A of subunit 1 to the active site in subunit 1, a binuclear center (BNC) formed by heme A3 and copper B (CU(B)). The BNC reduces molecular oxygen to 2 water molecules using 4 electrons from cytochrome c in the IMS and 4 protons from the mitochondrial matrix. The protein is Cytochrome c oxidase subunit 2 (COX2) of Trichophyton rubrum (Athlete's foot fungus).